A 344-amino-acid polypeptide reads, in one-letter code: MPKYPLLGMTLTELQSVTKDLGMPAFAAKQIASWLYDKKVTSIDEMTNLSLKHRELLKGEYDLGISAPVDEMRSVDGTVKYLYQVSDNHFVEAVYIPDEDRATLCVSSQVGCKMNCKFCMTGKQGFTASLTANQILNQIAALPEWDKLTNVVMMGMGEPLDNLDEVLKALHILTASYGYGWSPKRITLSSVGLRKGLQRFIEESECHLAISLHSPFPSQRSELMPAERAFSIKEMVDLLKNYDFSKQRRLSFEYIVFKGVNDSLIYAKELLKLLRGLDCRVNLIRFHAIPGVDLEGAGMETMTSFRDYLTSHGLFTTIRASRGEDIFAACGMLSTAKQEESNKN.

The active-site Proton acceptor is the E92. Residues 98-325 (DEDRATLCVS…TTIRASRGED (228 aa)) enclose the Radical SAM core domain. Residues C105 and C330 are joined by a disulfide bond. 3 residues coordinate [4Fe-4S] cluster: C112, C116, and C119. S-adenosyl-L-methionine contacts are provided by residues 157–158 (GE), S189, 211–213 (SLH), and H287. C330 (S-methylcysteine intermediate) is an active-site residue.

This sequence belongs to the radical SAM superfamily. RlmN family. It depends on [4Fe-4S] cluster as a cofactor.

Its subcellular location is the cytoplasm. The catalysed reaction is adenosine(2503) in 23S rRNA + 2 reduced [2Fe-2S]-[ferredoxin] + 2 S-adenosyl-L-methionine = 2-methyladenosine(2503) in 23S rRNA + 5'-deoxyadenosine + L-methionine + 2 oxidized [2Fe-2S]-[ferredoxin] + S-adenosyl-L-homocysteine. The enzyme catalyses adenosine(37) in tRNA + 2 reduced [2Fe-2S]-[ferredoxin] + 2 S-adenosyl-L-methionine = 2-methyladenosine(37) in tRNA + 5'-deoxyadenosine + L-methionine + 2 oxidized [2Fe-2S]-[ferredoxin] + S-adenosyl-L-homocysteine. Specifically methylates position 2 of adenine 2503 in 23S rRNA and position 2 of adenine 37 in tRNAs. The polypeptide is Probable dual-specificity RNA methyltransferase RlmN (Bacteroides fragilis (strain YCH46)).